We begin with the raw amino-acid sequence, 194 residues long: Putative 3-methyladenine DNA glycosylase (194 aa).

This sequence belongs to the DNA glycosylase MPG family.

The polypeptide is Putative 3-methyladenine DNA glycosylase (Aeropyrum pernix (strain ATCC 700893 / DSM 11879 / JCM 9820 / NBRC 100138 / K1)).